The chain runs to 622 residues: Dehydrogenase mpl7 (622 aa).

FAD is bound by residues 23 to 24 (TA), 44 to 45 (EA), and 102 to 105 (NFMS). His-554 acts as the Proton acceptor in catalysis. Residues Ala-582 and 593-594 (IM) each bind FAD.

It belongs to the GMC oxidoreductase family. As to quaternary structure, homodimer. The cofactor is FAD.

Its pathway is mycotoxin biosynthesis. Dehydrogenase; part of the gene cluster that mediates the biosynthesis of the mycotoxin citrinin, a hepato-nephrotoxic compound to humans due to inhibition of respiration complex III. The pathway begins with the synthesis of a keto-aldehyde intermediate by the citrinin PKS (pksCT) from successive condensations of 4 malonyl-CoA units, presumably with a simple acetyl-CoA starter unit. Release of the keto-aldehyde intermediate is consistent with the presence of the C-terminal reductive release domain. Mp11 collaborates with pksCT by catalyzing the hydrolysis of ACP-bound acyl intermediates to free the ACP from stalled intermediates. Mpl2 then catalyzes the oxidation of the C-12 methyl of the ketone intermediate to an alcohol intermediate which is further oxidized by the oxidoreductase mpl7 to produce a bisaldehyde intermediate. The fourth catalytic step is catalyzed by the mpl4 aldehyde dehydrogenase. The final transformation is the reduction of C-3 by mpl6 to provide the chemically stable citrinin nucleus. This chain is Dehydrogenase mpl7, found in Monascus purpureus (Red mold).